Consider the following 896-residue polypeptide: MTTTAQDNSPKKRQRIINCVTQLPYKIQLGESNDDWKISATTGNSALFSSLEYLQFDSTEYEQHVVGWTGEITRTERNLFTREAKEKPQDLDDDPLYLTKEQINGLTTTLQDHMKSDKEAKTDTTQTAPVTNNVHPVWLLRKNQSRWRNYAEKVIWPTFHYILNPSNEGEQEKNWWYDYVKFNEAYAQKIGEVYRKGDIIWIHDYYLLLLPQLLRMKFNDESIIIGYFHHAPWPSNEYFRCLPRRKQILDGLVGANRICFQNESFSRHFVSSCKRLLDATAKKSKNSSNSDQYQVSVYGGDVLVDSLPIGVNTTQILKDAFTKDIDSKVLSIKQAYQNKKIIIGRDRLDSVRGVVQKLRAFETFLAMYPEWRDQVVLIQVSSPTANRNSPQTIRLEQQVNELVNSINSEYGNLNFSPVQHYYMRIPKDVYLSLLRVADLCLITSVRDGMNTTALEYVTVKSHMSNFLCYGNPLILSEFSGSSNVLKDAIVVNPWDSVAVAKSINMALKLDKEEKSNLESKLWKEVPTIQDWTNKFLSSLKEQASSNDDMERKMTPALNRPVLLENYKQAKRRLFLFDYDGTLTPIVKDPAAAIPSARLYTILQKLCADPHNQIWIISGRDQKFLNKWLGGKLPQLGLSAEHGCFMKDVSCQDWVNLTEKVDMSWQVRVNEVMEEFTTRTPGSFIERKKVALTWHYRRTVPELGEFHAKELKEKLLSFTDDFDLEVMDGKANIEVRPRFVNKGEIVKRLVWHQHGKPQDMLKGISEKLPKDEMPDFVLCLGDDFTDEDMFRQLNTIETCWKEKYPDQKNQWGNYGFYPVTVGSASKKTVAKAHLTDPQQVLETLGLLVGDVSLFQSAGTVDLDSRGHVKNSESSLKSKLASKAYVMKRSASYTGAKV.

The tract at residues Met1 to Thr554 is glycosyltransferase.

The protein in the N-terminal section; belongs to the glycosyltransferase 20 family. It in the C-terminal section; belongs to the trehalose phosphatase family. In terms of assembly, the trehalose synthase complex is composed of the two catalytic subunits TPS1 and TPS2, and at least one of the two regulatory subunits TPS3 or TSL1. Requires Mg(2+) as cofactor.

It localises to the cytoplasm. It carries out the reaction alpha,alpha-trehalose 6-phosphate + H2O = alpha,alpha-trehalose + phosphate. The protein operates within carbohydrate biosynthesis. Inhibited by EDTA. Its function is as follows. Phosphatase catalytic subunit of the trehalose synthase complex that catalyzes the production of trehalose from glucose-6-phosphate and UDP-alpha-D-glucose in a two step process. This chain is Trehalose-phosphatase, found in Saccharomyces cerevisiae (strain ATCC 204508 / S288c) (Baker's yeast).